Consider the following 225-residue polypeptide: NAD(P)H-quinone oxidoreductase subunit K, chloroplastic (225 aa).

[4Fe-4S] cluster is bound by residues Cys-43, Cys-44, Cys-108, and Cys-139.

Belongs to the complex I 20 kDa subunit family. As to quaternary structure, NDH is composed of at least 16 different subunits, 5 of which are encoded in the nucleus. It depends on [4Fe-4S] cluster as a cofactor.

Its subcellular location is the plastid. The protein localises to the chloroplast thylakoid membrane. It catalyses the reaction a plastoquinone + NADH + (n+1) H(+)(in) = a plastoquinol + NAD(+) + n H(+)(out). The enzyme catalyses a plastoquinone + NADPH + (n+1) H(+)(in) = a plastoquinol + NADP(+) + n H(+)(out). In terms of biological role, NDH shuttles electrons from NAD(P)H:plastoquinone, via FMN and iron-sulfur (Fe-S) centers, to quinones in the photosynthetic chain and possibly in a chloroplast respiratory chain. The immediate electron acceptor for the enzyme in this species is believed to be plastoquinone. Couples the redox reaction to proton translocation, and thus conserves the redox energy in a proton gradient. This Dioscorea elephantipes (Elephant's foot yam) protein is NAD(P)H-quinone oxidoreductase subunit K, chloroplastic.